Consider the following 88-residue polypeptide: Arminin 1a (88 aa).

The N-terminal stretch at 1 to 18 is a signal peptide; that stretch reads MKTVLAFLFLPFIAFTHA. A propeptide spanning residues 19–57 is cleaved from the precursor; that stretch reads ESYEDVKEEIKNEAEKEIFEDLEEESDALDSSVREFNDA. Val85 bears the Valine amide mark.

It belongs to the arminin family. Expressed in entodermal epithelium along the body column.

It is found in the secreted. It localises to the target cell membrane. Antimicrobial peptide with a broad-spectrum antimicrobial activity. Shows very strong bactericidal activity against B.megaterium (MBC=0.1 uM), E.coli (MBC=0.2 uM), S.aureus (MBC=0.4 uM), methicillin-resistant S.aureus (MRSA) (MBC=0.4-0.8 uM), vancomycin-resistant enterococci (VRE) (E.faecalis (MBC=1.6 uM), and E.faecium (MBC=0.4-0.8 uM)), and extended-spectrum beta-lactamase (ESBL)-producing enterobacteriaceae strains (K.pneumoniae (MBC=0.4-0.8 uM), E.coli (MBC=0.2-0.4 uM)). Keeps its antibacterial activity under a wide range of salt concentrations that mimic physiological conditions of human blood, which is surprising, since Hydra is an obligate freshwater animal with nearly no salt tolerance. Does not affect red blood cells. This is Arminin 1a from Hydra vulgaris (Hydra).